We begin with the raw amino-acid sequence, 567 residues long: Urease subunit alpha (567 aa).

Residues Gly-129 to Phe-567 form the Urease domain. His-134, His-136, and Lys-217 together coordinate Ni(2+). Lys-217 carries the N6-carboxylysine modification. His-219 contacts substrate. Ni(2+) is bound by residues His-246 and His-272. His-320 acts as the Proton donor in catalysis. Ni(2+) is bound at residue Asp-360.

Belongs to the metallo-dependent hydrolases superfamily. Urease alpha subunit family. Heterotrimer of UreA (gamma), UreB (beta) and UreC (alpha) subunits. Three heterotrimers associate to form the active enzyme. Requires Ni cation as cofactor. In terms of processing, carboxylation allows a single lysine to coordinate two nickel ions.

Its subcellular location is the cytoplasm. It carries out the reaction urea + 2 H2O + H(+) = hydrogencarbonate + 2 NH4(+). It participates in nitrogen metabolism; urea degradation; CO(2) and NH(3) from urea (urease route): step 1/1. This chain is Urease subunit alpha, found in Citrobacter koseri (strain ATCC BAA-895 / CDC 4225-83 / SGSC4696).